A 1501-amino-acid polypeptide reads, in one-letter code: EF-hand calcium-binding domain-containing protein 6 (1501 aa).

The segment at 18-47 (RKFTHSRPHSSPCRVYSRNGSPNKFRSSST) is disordered. The segment covering 35-47 (RNGSPNKFRSSST) has biased composition (polar residues). EF-hand domains follow at residues 70–105 (DRGD…FLMP), 172–207 (KNIK…FCMK), 297–332 (KSYE…FVYQ), 403–438 (DHSA…MAVK), 439–474 (LSDS…NCRM), 504–539 (RNLQ…FCPF), and 634–669 (QQDP…TGMP). A disordered region spans residues 699-718 (EDPPMRGPETTPPQPPTPSK). EF-hand domains follow at residues 741-776 (ESFR…LLLN), 847-882 (NRWS…FDIP), 883-918 (LTPR…NYSP), 964-999 (DRHQ…CGCS), 1069-1104 (SSQL…FCYK), 1176-1211 (SHYH…RVQI), and 1212-1247 (LTDE…ETAA). Ca(2+) is bound by residues Asp754, Asp756, Asp758, and Asp765. Phosphothreonine is present on Thr884. A disordered region spans residues 1246 to 1307 (AATPMATGDS…TTVIPGTPPL (62 aa)). Polar residues-rich tracts occupy residues 1270–1279 (GTRSALSLPT) and 1286–1301 (SKSQ…TTVI). Phosphoserine is present on Ser1290. A phosphothreonine mark is found at Thr1294 and Thr1304. The interaction with PARK7 stretch occupies residues 1303-1501 (GTPPLQNCDP…YNDFLRAFLQ (199 aa)). 3 EF-hand domains span residues 1359 to 1394 (ISKE…LLKA), 1434 to 1469 (HCWR…YSIN), and 1470 to 1501 (LSEE…AFLQ). The segment at 1407–1501 (NAHKMKEAGA…YNDFLRAFLQ (95 aa)) is interaction with AR.

Microtubule inner protein component of sperm flagellar doublet microtubules. Binds PARK7. Part of a ternary complex containing PARK7, EFCAB6/DJBP and AR. Specifically expressed in the testis.

The protein resides in the nucleus. Its subcellular location is the cytoplasm. It is found in the cytoskeleton. The protein localises to the flagellum axoneme. Functionally, negatively regulates the androgen receptor by recruiting histone deacetylase complex, and protein DJ-1 antagonizes this inhibition by abrogation of this complex. Microtubule inner protein (MIP) part of the dynein-decorated doublet microtubules (DMTs) in cilia axoneme, which is required for motile cilia beating. This Homo sapiens (Human) protein is EF-hand calcium-binding domain-containing protein 6.